The sequence spans 158 residues: 2-C-methyl-D-erythritol 2,4-cyclodiphosphate synthase (158 aa).

A divalent metal cation-binding residues include D8 and H10. Residues 8-10 (DVH) and 34-35 (HS) contribute to the 4-CDP-2-C-methyl-D-erythritol 2-phosphate site. H42 lines the a divalent metal cation pocket. Residues 56-58 (DIG), 61-65 (FPDTD), 100-106 (AQAPKMA), 132-135 (TTSE), F139, and R142 contribute to the 4-CDP-2-C-methyl-D-erythritol 2-phosphate site.

This sequence belongs to the IspF family. Homotrimer. It depends on a divalent metal cation as a cofactor.

It catalyses the reaction 4-CDP-2-C-methyl-D-erythritol 2-phosphate = 2-C-methyl-D-erythritol 2,4-cyclic diphosphate + CMP. It participates in isoprenoid biosynthesis; isopentenyl diphosphate biosynthesis via DXP pathway; isopentenyl diphosphate from 1-deoxy-D-xylulose 5-phosphate: step 4/6. Its function is as follows. Involved in the biosynthesis of isopentenyl diphosphate (IPP) and dimethylallyl diphosphate (DMAPP), two major building blocks of isoprenoid compounds. Catalyzes the conversion of 4-diphosphocytidyl-2-C-methyl-D-erythritol 2-phosphate (CDP-ME2P) to 2-C-methyl-D-erythritol 2,4-cyclodiphosphate (ME-CPP) with a corresponding release of cytidine 5-monophosphate (CMP). The polypeptide is 2-C-methyl-D-erythritol 2,4-cyclodiphosphate synthase (Aliivibrio fischeri (strain ATCC 700601 / ES114) (Vibrio fischeri)).